We begin with the raw amino-acid sequence, 418 residues long: ATP phosphoribosyltransferase regulatory subunit (418 aa).

Belongs to the class-II aminoacyl-tRNA synthetase family. HisZ subfamily. In terms of assembly, heteromultimer composed of HisG and HisZ subunits.

Its subcellular location is the cytoplasm. It participates in amino-acid biosynthesis; L-histidine biosynthesis; L-histidine from 5-phospho-alpha-D-ribose 1-diphosphate: step 1/9. In terms of biological role, required for the first step of histidine biosynthesis. May allow the feedback regulation of ATP phosphoribosyltransferase activity by histidine. The polypeptide is ATP phosphoribosyltransferase regulatory subunit (Acetivibrio thermocellus (strain ATCC 27405 / DSM 1237 / JCM 9322 / NBRC 103400 / NCIMB 10682 / NRRL B-4536 / VPI 7372) (Clostridium thermocellum)).